A 377-amino-acid polypeptide reads, in one-letter code: UPF0754 membrane protein YheB (377 aa).

2 helical membrane passes run Met1–Thr21 and Tyr357–Phe377.

Belongs to the UPF0754 family.

The protein localises to the cell membrane. In Bacillus subtilis (strain 168), this protein is UPF0754 membrane protein YheB (yheB).